The following is a 358-amino-acid chain: Gap junction alpha-5 protein (358 aa).

The Cytoplasmic segment spans residues 1–19; it reads MGDWSFLGEFLEEVHKHST. A helical membrane pass occupies residues 20-40; sequence VIGKVWLTVLFIFRMLVLGTA. Topologically, residues 41–76 are extracellular; it reads AESSWGDEQADFRCDTIQPGCQNVCYDQAFPISHIR. A helical membrane pass occupies residues 77–97; that stretch reads YWVLQIIFVSTPSLVYMGHAM. The Cytoplasmic portion of the chain corresponds to 98–164; it reads HTVRMQEKQK…CTILIRTTME (67 aa). The chain crosses the membrane as a helical span at residues 165–185; the sequence is VAFIVGQYLLYGIFLDTLHVC. At 186 to 205 the chain is on the extracellular side; sequence RRSPCPHPVNCYVSRPTEKN. A helical membrane pass occupies residues 206–226; the sequence is VFIVFMMAVAGLSLFLSLAEL. Residues 227–358 lie on the Cytoplasmic side of the membrane; that stretch reads YHLGWKKIRQ…SKARSDDLSV (132 aa). Disordered regions lie at residues 242-262 and 318-358; these read RQGV…QSLT and SQKP…DLSV. A phosphoserine mark is found at S353 and S357.

It belongs to the connexin family. Alpha-type (group II) subfamily. In terms of assembly, a connexon is composed of a hexamer of connexins. As to expression, abundantly expressed in the lung, also expressed in the kidney and heart.

It is found in the cell membrane. The protein localises to the cell junction. The protein resides in the gap junction. Functionally, one gap junction consists of a cluster of closely packed pairs of transmembrane channels, the connexons, through which materials of low MW diffuse from one cell to a neighboring cell. This Mus musculus (Mouse) protein is Gap junction alpha-5 protein (Gja5).